Reading from the N-terminus, the 512-residue chain is FAD-dependent monooxygenase prx3 (512 aa).

The N-terminal stretch at 1–19 (MLSLKAFLALSLSIHLSQG) is a signal peptide. The region spanning 63–235 (CQTTPTCVFA…TRFDLATFSV (173 aa)) is the FAD-binding PCMH-type domain. H100 is modified (pros-8alpha-FAD histidine). Residues N197, N281, N307, N329, N361, and N477 are each glycosylated (N-linked (GlcNAc...) asparagine).

It belongs to the oxygen-dependent FAD-linked oxidoreductase family.

Its pathway is sesquiterpene biosynthesis. Its function is as follows. FAD-dependent monooxygenase; part of the gene cluster that mediates the biosynthesis of PR-toxin, a bicyclic sesquiterpene belonging to the eremophilane class and acting as a mycotoxin. The first step of the pathway is catalyzed by the aristolochene synthase which performs the cyclization of trans,trans-farnesyl diphosphate (FPP) to the bicyclic sesquiterpene aristolochene. Following the formation of aristolochene, the non-oxygenated aristolochene is converted to the trioxygenated intermediate eremofortin B, via 7-epi-neopetasone. This conversion appears to involve three enzymes, a hydroxysterol oxidase-like enzyme, the quinone-oxidase prx3 that forms the quinone-type-structure in the bicyclic nucleus of aristolochene with the C8-oxo group and the C-3 hydroxyl group, and the P450 monooxygenase ORF6 that introduces the epoxide at the double bond between carbons 1 and 2. No monoxy or dioxy-intermediates have been reported to be released to the broth, so these three early oxidative reactions may be coupled together. Eremofortin B is further oxidized by another P450 monooxygenase, that introduces a second epoxide between carbons 7 and 11 prior to acetylation to eremofortin A by the acetyltransferase ORF8. The second epoxidation may be performed by a second P450 monooxygenase. After the acetylation step, eremofortin A is converted to eremofortin C and then to PR-toxin. First the conversion of eremofortin A to eremofortin C proceeds by oxidation of the side chain of the molecule at C-12 and is catalyzed by the short-chain oxidoreductase prx1. The cytochrome P450 monooxygenase ORF6 is probably also involved in this step. The primary alcohol formed at C-12 is finally oxidized by the short-chain alcohol dehydrogenase prx4 that forms PR-toxin. This chain is FAD-dependent monooxygenase prx3, found in Penicillium roqueforti (strain FM164).